The chain runs to 123 residues: Protein Wnt-7a (123 aa).

The O-palmitoleoyl serine; by PORCN moiety is linked to residue S1. The segment at 33–61 (VEPVRASRNKRPTFLKIKKPLSYLKPMDT) is disordered linker. The cysteines at positions 89 and 104 are disulfide-linked. N-linked (GlcNAc...) asparagine glycosylation occurs at N90.

This sequence belongs to the Wnt family. Post-translationally, palmitoleoylation is required for efficient binding to frizzled receptors. Depalmitoleoylation leads to Wnt signaling pathway inhibition.

Its subcellular location is the secreted. It localises to the extracellular space. The protein resides in the extracellular matrix. Functionally, ligand for members of the frizzled family of seven transmembrane receptors that functions in the canonical Wnt/beta-catenin signaling pathway. Plays an important role in embryonic development, including dorsal versus ventral patterning during limb development, skeleton development and urogenital tract development. Required for central nervous system (CNS) angiogenesis and blood-brain barrier regulation. The protein is Protein Wnt-7a (WNT-7A) of Plethodon jordani (Red-cheeked salamander).